A 470-amino-acid polypeptide reads, in one-letter code: Aminodeoxychorismate synthase component 1 (470 aa).

Belongs to the anthranilate synthase component I family. Monomer. Heterodimer consisting of two non-identical subunits: a glutamine amidotransferase subunit (PabA) and a aminodeoxychorismate synthase subunit (PabB). Requires Mg(2+) as cofactor.

The catalysed reaction is chorismate + L-glutamine = 4-amino-4-deoxychorismate + L-glutamate. Its pathway is cofactor biosynthesis; tetrahydrofolate biosynthesis; 4-aminobenzoate from chorismate: step 1/2. In terms of biological role, part of a heterodimeric complex that catalyzes the two-step biosynthesis of 4-amino-4-deoxychorismate (ADC), a precursor of p-aminobenzoate (PABA) and tetrahydrofolate. In the first step, a glutamine amidotransferase (PabA) generates ammonia as a substrate that, along with chorismate, is used in the second step, catalyzed by aminodeoxychorismate synthase (PabB) to produce ADC. In Bacillus subtilis (strain 168), this protein is Aminodeoxychorismate synthase component 1 (pabB).